The chain runs to 106 residues: Small ribosomal subunit protein bS16 (106 aa).

It belongs to the bacterial ribosomal protein bS16 family.

This chain is Small ribosomal subunit protein bS16, found in Wolbachia sp. subsp. Brugia malayi (strain TRS).